The sequence spans 284 residues: Chaperone protein dnaJ 6 (284 aa).

3 disordered regions span residues 1 to 30 (MGRK…ETSL), 196 to 221 (NKIS…AKDS), and 252 to 284 (GGDA…SRGK). The short motif at 3–6 (RKKK) is the Nuclear localization signal element. The J domain occupies 29–94 (SLYEVLGVER…EKRAVYDQTG (66 aa)). A Nuclear localization signal motif is present at residues 209-215 (RKRKKKK). The segment covering 255 to 265 (AEAEPTEEEFE) has biased composition (acidic residues). The span at 266–275 (AAQRRIESKR) shows a compositional bias: basic and acidic residues.

The protein belongs to the DnaJ family. C/III subfamily. In terms of tissue distribution, highly expressed in leaves, flowers and siliques, and to lower extent in roots.

Its subcellular location is the nucleus. Its function is as follows. Plays a continuous role in plant development probably in the structural organization of compartments. The protein is Chaperone protein dnaJ 6 (ATJ6) of Arabidopsis thaliana (Mouse-ear cress).